The chain runs to 315 residues: Calcium homeostasis modulator protein 6 (315 aa).

The Cytoplasmic portion of the chain corresponds to 1-21; that stretch reads MEKFKAVLDLQIKHRSALGYG. The chain crosses the membrane as a helical span at residues 22 to 37; the sequence is LVTLLTAGGEKIFSTV. Topologically, residues 38-46 are extracellular; it reads VFQCPCTAT. Cystine bridges form between cysteine 41-cysteine 127, cysteine 43-cysteine 156, and cysteine 140-cysteine 147. The chain crosses the membrane as a helical span at residues 47–68; sequence LNLTYGLVFLLVPALALFLLGY. Over 69 to 103 the chain is Cytoplasmic; it reads ALSARTWRLLTGCCSRSASTRSSSGLRSTLVCAQV. Residues 104–128 traverse the membrane as a helical segment; that stretch reads SAVAALAPLTWVAVALLGGSFYQCA. The Extracellular portion of the chain corresponds to 129-169; sequence VSGSTRLASYLCKDRNHSCIAKLPQVPCNKQEAEMQEILSQ. Residues 170-192 traverse the membrane as a helical segment; it reads LKAQSQVLGWVLIAAVIFLLLVF. Over 193 to 315 the chain is Cytoplasmic; that stretch reads KCVSRCFSPV…DAAMANTHGV (123 aa).

This sequence belongs to the CALHM family. In terms of assembly, oligomerizes to form decameric and undecameric channels.

It localises to the cell membrane. It catalyses the reaction ATP(in) = ATP(out). Pore-forming subunit of an ATP-permeable channel. In response to pathogen-derived and proinflammatory stimuli, relocates from intracellular compartments to NK-dendritic cell and NK-macrophage immune synapses where it mediates ATP efflux and NK cell activation involved in antimicrobial and antitumor responses. May assemble to form gap junction channel-like structures with gating and ion conductance likely regulated by membrane lipids and voltage rather than by extracellular calcium levels. The sequence is that of Calcium homeostasis modulator protein 6 from Rattus norvegicus (Rat).